The chain runs to 59 residues: Large ribosomal subunit protein bL32 (59 aa).

The protein belongs to the bacterial ribosomal protein bL32 family.

This chain is Large ribosomal subunit protein bL32, found in Polynucleobacter necessarius subsp. necessarius (strain STIR1).